We begin with the raw amino-acid sequence, 283 residues long: 1-deoxypentalenic acid 11-beta-hydroxylase (283 aa).

Arginine 117 contacts substrate. Fe cation is bound by residues histidine 135 and aspartate 137. 2-oxoglutarate contacts are provided by residues 135–137 (HQD) and tryptophan 151. Arginine 186 is a binding site for substrate. Histidine 224 provides a ligand contact to Fe cation. 2-oxoglutarate-binding residues include serine 226 and arginine 238. Residues 260–283 (WPESAKDASKGILSKITGTPTTAE) form a disordered region.

It belongs to the PhyH family. It depends on Fe cation as a cofactor. Requires L-ascorbate as cofactor.

The catalysed reaction is 1-deoxypentalenate + 2-oxoglutarate + O2 = 1-deoxy-11beta-hydroxypentalenate + succinate + CO2. Its pathway is antibiotic biosynthesis; pentalenolactone biosynthesis. Functionally, catalyzes the conversion of 1-deoxypentalenic acid to 11-beta-hydroxy-1-deoxypentalenic acid in the biosynthesis of pentalenolactone antibiotic. This Streptomyces exfoliatus (Streptomyces hydrogenans) protein is 1-deoxypentalenic acid 11-beta-hydroxylase (penH).